Reading from the N-terminus, the 200-residue chain is Ribosome maturation factor RimP (200 aa).

This sequence belongs to the RimP family.

The protein localises to the cytoplasm. Its function is as follows. Required for maturation of 30S ribosomal subunits. This is Ribosome maturation factor RimP from Polaromonas sp. (strain JS666 / ATCC BAA-500).